Reading from the N-terminus, the 130-residue chain is Protein ApaG (130 aa).

The 125-residue stretch at 3 to 127 (SAVTRGIEVT…FSLDVPEQRR (125 aa)) folds into the ApaG domain.

The chain is Protein ApaG from Brucella suis biovar 1 (strain 1330).